A 43-amino-acid chain; its full sequence is Potassium channel toxin gamma-KTx 4.9 (43 aa).

Cystine bridges form between Cys-5-Cys-23, Cys-11-Cys-34, Cys-20-Cys-39, and Cys-24-Cys-41.

This sequence belongs to the ergtoxin family. Gamma-KTx 4 subfamily. Expressed by the venom gland.

The protein resides in the secreted. Functionally, reversibly blocks Kv11/ERG potassium channels. In Centruroides sculpturatus (Arizona bark scorpion), this protein is Potassium channel toxin gamma-KTx 4.9.